The chain runs to 207 residues: UPF0319 protein VV2327 (207 aa).

The first 18 residues, 1–18 (MLRVLGLAGMLMSFNIHA), serve as a signal peptide directing secretion.

This sequence belongs to the UPF0319 family.

This is UPF0319 protein VV2327 from Vibrio vulnificus (strain YJ016).